Reading from the N-terminus, the 433-residue chain is Zuotin (433 aa).

Ser-50 carries the phosphoserine modification. In terms of domain architecture, J spans 98 to 170; it reads LYAAMGLSKL…RAQYDSCDFV (73 aa). A compositionally biased stretch (basic and acidic residues) spans 292-330; that stretch reads EEKKEKERRKWEREAGARAEAEAKAKAEAEAKAKAESEA. The segment at 292–357 is disordered; the sequence is EEKKEKERRK…KAAKKKNKRA (66 aa).

In terms of assembly, RAC is a heterodimer of the Hsp70/DnaK-type chaperone SSZ1 and the Hsp40/DnaJ-type chaperone ZUO1. RAC associates with ribosomes via ZUO1.

It localises to the cytoplasm. In terms of biological role, component of the ribosome-associated complex (RAC), a heterodimeric chaperone complex involved in regulation of accurate translation termination and in folding or maintaining nascent polypeptides in a folding-competent state. RAC stimulates the ATPase activity of the ribosome-associated pool of Hsp70-type chaperones SSB1/SSB2 that bind to the nascent polypeptide chain. ZUO1 can act as a J-protein for SSB1/SSB2 only when associated with SSZ1. The polypeptide is Zuotin (ZUO1) (Saccharomyces cerevisiae (strain ATCC 204508 / S288c) (Baker's yeast)).